The sequence spans 227 residues: Cytochrome c oxidase subunit 2 (227 aa).

Over 1–14 the chain is Mitochondrial intermembrane; it reads MAHSFQLGFQDATS. Residues 15 to 45 form a helical membrane-spanning segment; the sequence is PIMEELLHFHDHTLMIVFLISSLVLYIITLM. Topologically, residues 46 to 59 are mitochondrial matrix; sequence LTTKLTHTSTMDAQ. Residues 60 to 87 form a helical membrane-spanning segment; that stretch reads EVETVWTILPAIILILIALPSLRILYLM. Residues 88–227 lie on the Mitochondrial intermembrane side of the membrane; it reads DEINTPSLTV…HFENWSTSMI (140 aa). Residues histidine 161, cysteine 196, glutamate 198, cysteine 200, histidine 204, and methionine 207 each coordinate Cu cation. Position 198 (glutamate 198) interacts with Mg(2+).

Belongs to the cytochrome c oxidase subunit 2 family. In terms of assembly, component of the cytochrome c oxidase (complex IV, CIV), a multisubunit enzyme composed of 14 subunits. The complex is composed of a catalytic core of 3 subunits MT-CO1, MT-CO2 and MT-CO3, encoded in the mitochondrial DNA, and 11 supernumerary subunits COX4I, COX5A, COX5B, COX6A, COX6B, COX6C, COX7A, COX7B, COX7C, COX8 and NDUFA4, which are encoded in the nuclear genome. The complex exists as a monomer or a dimer and forms supercomplexes (SCs) in the inner mitochondrial membrane with NADH-ubiquinone oxidoreductase (complex I, CI) and ubiquinol-cytochrome c oxidoreductase (cytochrome b-c1 complex, complex III, CIII), resulting in different assemblies (supercomplex SCI(1)III(2)IV(1) and megacomplex MCI(2)III(2)IV(2)). Found in a complex with TMEM177, COA6, COX18, COX20, SCO1 and SCO2. Interacts with TMEM177 in a COX20-dependent manner. Interacts with COX20. Interacts with COX16. Cu cation is required as a cofactor.

It is found in the mitochondrion inner membrane. The catalysed reaction is 4 Fe(II)-[cytochrome c] + O2 + 8 H(+)(in) = 4 Fe(III)-[cytochrome c] + 2 H2O + 4 H(+)(out). Its function is as follows. Component of the cytochrome c oxidase, the last enzyme in the mitochondrial electron transport chain which drives oxidative phosphorylation. The respiratory chain contains 3 multisubunit complexes succinate dehydrogenase (complex II, CII), ubiquinol-cytochrome c oxidoreductase (cytochrome b-c1 complex, complex III, CIII) and cytochrome c oxidase (complex IV, CIV), that cooperate to transfer electrons derived from NADH and succinate to molecular oxygen, creating an electrochemical gradient over the inner membrane that drives transmembrane transport and the ATP synthase. Cytochrome c oxidase is the component of the respiratory chain that catalyzes the reduction of oxygen to water. Electrons originating from reduced cytochrome c in the intermembrane space (IMS) are transferred via the dinuclear copper A center (CU(A)) of subunit 2 and heme A of subunit 1 to the active site in subunit 1, a binuclear center (BNC) formed by heme A3 and copper B (CU(B)). The BNC reduces molecular oxygen to 2 water molecules using 4 electrons from cytochrome c in the IMS and 4 protons from the mitochondrial matrix. The chain is Cytochrome c oxidase subunit 2 (MT-CO2) from Cephalopachus bancanus (Western tarsier).